A 158-amino-acid polypeptide reads, in one-letter code: NAD(P)H-quinone oxidoreductase subunit J, chloroplastic (158 aa).

This sequence belongs to the complex I 30 kDa subunit family. NDH is composed of at least 16 different subunits, 5 of which are encoded in the nucleus.

It is found in the plastid. It localises to the chloroplast thylakoid membrane. It catalyses the reaction a plastoquinone + NADH + (n+1) H(+)(in) = a plastoquinol + NAD(+) + n H(+)(out). The catalysed reaction is a plastoquinone + NADPH + (n+1) H(+)(in) = a plastoquinol + NADP(+) + n H(+)(out). Its function is as follows. NDH shuttles electrons from NAD(P)H:plastoquinone, via FMN and iron-sulfur (Fe-S) centers, to quinones in the photosynthetic chain and possibly in a chloroplast respiratory chain. The immediate electron acceptor for the enzyme in this species is believed to be plastoquinone. Couples the redox reaction to proton translocation, and thus conserves the redox energy in a proton gradient. This is NAD(P)H-quinone oxidoreductase subunit J, chloroplastic from Buxus microphylla (Littleleaf boxwood).